A 484-amino-acid polypeptide reads, in one-letter code: Poly(A) RNA polymerase GLD2 (484 aa).

2 positions are modified to phosphoserine: Ser62 and Ser69. The Nuclear localization signal motif lies at 76-92 (KRLSDEKNLPLDGKRQR). Position 95 is a phosphoserine (Ser95). Mg(2+) is bound by residues Asp213 and Asp215. One can recognise a PAP-associated domain in the interval 386–440 (NLGDLLLGFLKYYATEFDWNSQMISVREAKAIPRPDGIEWRNKYICVEEPFDGTN).

It belongs to the DNA polymerase type-B-like family. GLD2 subfamily. In terms of assembly, interacts with CPEB1, CPEB2, CPSF1 and PABPC1. Interacts with QKI isoform QKI7; promoting recruitment to miRNA miR-122 and miR-122 stabilization. Mg(2+) is required as a cofactor. It depends on Mn(2+) as a cofactor.

It localises to the cytoplasm. The protein resides in the nucleus. It carries out the reaction RNA(n) + ATP = RNA(n)-3'-adenine ribonucleotide + diphosphate. Its function is as follows. Cytoplasmic poly(A) RNA polymerase that adds successive AMP monomers to the 3'-end of specific RNAs, forming a poly(A) tail. In contrast to the canonical nuclear poly(A) RNA polymerase, it only adds poly(A) to selected cytoplasmic mRNAs. Does not play a role in replication-dependent histone mRNA degradation. Adds a single nucleotide to the 3' end of specific miRNAs, monoadenylation stabilizes and prolongs the activity of some but not all miRNAs. In Bos taurus (Bovine), this protein is Poly(A) RNA polymerase GLD2.